Consider the following 223-residue polypeptide: Phosphoribosylformylglycinamidine synthase subunit PurQ (223 aa).

One can recognise a Glutamine amidotransferase type-1 domain in the interval 3-223 (FAVLVFPGSN…MVNSWREQNV (221 aa)). Cys85 serves as the catalytic Nucleophile. Residues His193 and Glu195 contribute to the active site.

Part of the FGAM synthase complex composed of 1 PurL, 1 PurQ and 2 PurS subunits.

It localises to the cytoplasm. It catalyses the reaction N(2)-formyl-N(1)-(5-phospho-beta-D-ribosyl)glycinamide + L-glutamine + ATP + H2O = 2-formamido-N(1)-(5-O-phospho-beta-D-ribosyl)acetamidine + L-glutamate + ADP + phosphate + H(+). The enzyme catalyses L-glutamine + H2O = L-glutamate + NH4(+). It participates in purine metabolism; IMP biosynthesis via de novo pathway; 5-amino-1-(5-phospho-D-ribosyl)imidazole from N(2)-formyl-N(1)-(5-phospho-D-ribosyl)glycinamide: step 1/2. In terms of biological role, part of the phosphoribosylformylglycinamidine synthase complex involved in the purines biosynthetic pathway. Catalyzes the ATP-dependent conversion of formylglycinamide ribonucleotide (FGAR) and glutamine to yield formylglycinamidine ribonucleotide (FGAM) and glutamate. The FGAM synthase complex is composed of three subunits. PurQ produces an ammonia molecule by converting glutamine to glutamate. PurL transfers the ammonia molecule to FGAR to form FGAM in an ATP-dependent manner. PurS interacts with PurQ and PurL and is thought to assist in the transfer of the ammonia molecule from PurQ to PurL. The sequence is that of Phosphoribosylformylglycinamidine synthase subunit PurQ from Staphylococcus haemolyticus (strain JCSC1435).